A 178-amino-acid polypeptide reads, in one-letter code: Interleukin-10 (178 aa).

The N-terminal stretch at 1 to 18 (MHSSALLCYLVFLAGVGA) is a signal peptide. Disulfide bonds link C30–C126 and C80–C132. Residue N67 is glycosylated (N-linked (GlcNAc...) asparagine). N134 is a glycosylation site (N-linked (GlcNAc...) asparagine).

It belongs to the IL-10 family. Homodimer. Interacts with IL10RA and IL10RB.

The protein localises to the secreted. Its function is as follows. Major immune regulatory cytokine that acts on many cells of the immune system where it has profound anti-inflammatory functions, limiting excessive tissue disruption caused by inflammation. Mechanistically, IL10 binds to its heterotetrameric receptor comprising IL10RA and IL10RB leading to JAK1 and STAT2-mediated phosphorylation of STAT3. In turn, STAT3 translocates to the nucleus where it drives expression of anti-inflammatory mediators. Targets antigen-presenting cells (APCs) such as macrophages and monocytes and inhibits their release of pro-inflammatory cytokines including granulocyte-macrophage colony-stimulating factor /GM-CSF, granulocyte colony-stimulating factor/G-CSF, IL-1 alpha, IL-1 beta, IL-6, IL-8 and TNF-alpha. Also interferes with antigen presentation by reducing the expression of MHC-class II and co-stimulatory molecules, thereby inhibiting their ability to induce T cell activation. In addition, controls the inflammatory response of macrophages by reprogramming essential metabolic pathways including mTOR signaling. In Equus caballus (Horse), this protein is Interleukin-10 (IL10).